The primary structure comprises 673 residues: Annexin A6 (673 aa).

Alanine 2 carries the N-acetylalanine modification. Phosphoserine is present on serine 13. 8 Annexin repeats span residues 20-91, 92-163, 175-247, 251-322, 363-434, 435-506, 521-595, and 599-670; these read FDAN…NLMR, PLAY…VLLQ, DLVQ…AVVK, STPE…KLCG, FNPD…GLMM, PPAH…SLAT, EDAQ…AIVQ, and NKPL…ALCG. Tyrosine 30 is modified (phosphotyrosine). Residues lysine 63, lysine 68, lysine 75, and lysine 81 each carry the N6-acetyllysine modification. A Phosphotyrosine modification is found at tyrosine 201. Residues lysine 306, lysine 370, and lysine 418 each carry the N6-acetyllysine modification. Serine 422 is subject to Phosphoserine. The residue at position 483 (lysine 483) is an N6-acetyllysine. Serine 537 bears the Phosphoserine mark. The residue at position 620 (lysine 620) is an N6-acetyllysine.

This sequence belongs to the annexin family.

The protein localises to the cytoplasm. Its subcellular location is the melanosome. Its function is as follows. May associate with CD21. May regulate the release of Ca(2+) from intracellular stores. The chain is Annexin A6 (Anxa6) from Mus musculus (Mouse).